The chain runs to 187 residues: Probable chorismate pyruvate-lyase (187 aa).

The substrate site is built by Arg76, Leu114, and Glu173.

It belongs to the UbiC family.

It is found in the cytoplasm. It catalyses the reaction chorismate = 4-hydroxybenzoate + pyruvate. The protein operates within cofactor biosynthesis; ubiquinone biosynthesis. Functionally, removes the pyruvyl group from chorismate, with concomitant aromatization of the ring, to provide 4-hydroxybenzoate (4HB) for the ubiquinone pathway. The polypeptide is Probable chorismate pyruvate-lyase (Shewanella amazonensis (strain ATCC BAA-1098 / SB2B)).